We begin with the raw amino-acid sequence, 270 residues long: Endochitinase PR4 (270 aa).

Residues 1 to 23 (MGNKLVLVLVAVALVMGPKNVSA) form the signal peptide. A Chitin-binding type-1 domain is found at 24–58 (QNCGCAEGLCCSQYGYCGTGEDYCGTGCQQGPCTT). 7 disulfide bridges follow: C26-C34, C28-C40, C33-C47, C51-C56, C88-C137, C150-C160, and C238-C270. The active-site Proton donor is E132.

Belongs to the glycosyl hydrolase 19 family. Chitinase class I subfamily.

It carries out the reaction Random endo-hydrolysis of N-acetyl-beta-D-glucosaminide (1-&gt;4)-beta-linkages in chitin and chitodextrins.. In terms of biological role, defense against chitin-containing fungal pathogens. The chain is Endochitinase PR4 (CHI4) from Phaseolus vulgaris (Kidney bean).